A 572-amino-acid chain; its full sequence is Transmembrane glycoprotein NMB (572 aa).

Positions 1 to 22 (MESLCGVLVFLLLAAGLPLQAA) are cleaved as a signal peptide. The Extracellular segment spans residues 23 to 500 (KRFRDVLGHE…DLGSPLRTVN (478 aa)). N93, N134, N200, N249, N275, N296, N300, N306, and N312 each carry an N-linked (GlcNAc...) asparagine glycan. Residues 251 to 338 (SDETFLRDLP…SPSSSTSPSP (88 aa)) enclose the PKD domain. The segment at 321 to 359 (GPCPSPTPSPSSSTSPSPASSPSPTLSTPSPSLMPTGHK) is disordered. The segment covering 330–356 (PSSSTSPSPASSPSPTLSTPSPSLMPT) has biased composition (low complexity). N-linked (GlcNAc...) asparagine glycans are attached at residues N461 and N469. The chain crosses the membrane as a helical span at residues 501-521 (GVLISIGCLAMFVTMVTILLY). At 522-572 (KKHKTYKPIGNCTRNVVKGKGLSVFLSHAKAPFSRGDREKDPLLQDKPWML) the chain is on the cytoplasmic side. A Phosphoserine modification is found at S544. The Cell attachment site signature appears at 556–558 (RGD).

It belongs to the PMEL/NMB family.

The protein resides in the cell membrane. Its subcellular location is the melanosome membrane. It localises to the early endosome membrane. Functionally, could be a melanogenic enzyme. The chain is Transmembrane glycoprotein NMB (Gpnmb) from Rattus norvegicus (Rat).